The sequence spans 801 residues: Protocadherin beta-8 (801 aa).

The signal sequence occupies residues 1 to 29 (MEASGKLICRQRQVLFSFLLLGLSLAGAA). The Extracellular portion of the chain corresponds to 30 to 691 (EPRSYSVVEE…GQADSLTVYL (662 aa)). Cadherin domains are found at residues 36–134 (VVEE…SPVF), 139–243 (MLVK…APEF), 248–348 (YRVQ…APEV), 353–452 (FTSP…APAF), and 457–562 (YTLF…SPFV). C97 and C103 form a disulfide bridge. N-linked (GlcNAc...) asparagine glycans are attached at residues N419 and N437. The N-linked (GlcNAc...) asparagine glycan is linked to N568. In terms of domain architecture, Cadherin 6 spans 569–672 (GSAPCTELVP…LVDGFSQPYL (104 aa)). Residues 692 to 710 (VVALASVSSLFLFSVLLFV) traverse the membrane as a helical segment. Topologically, residues 711–801 (AVLLCRRSRA…NGFGFSLQLK (91 aa)) are cytoplasmic.

Forms homodimers in trans (molecules expressed by two different cells). Forms promiscuous heterodimers in cis (at the plasma membrane of the same cell) with other protocadherins.

Its subcellular location is the cell membrane. In terms of biological role, calcium-dependent cell-adhesion protein involved in cells self-recognition and non-self discrimination. Thereby, it is involved in the establishment and maintenance of specific neuronal connections in the brain. This chain is Protocadherin beta-8, found in Homo sapiens (Human).